A 484-amino-acid chain; its full sequence is tRNA sulfurtransferase (484 aa).

Positions 63-167 (QAFGERLACI…GDKLYMVTKR (105 aa)) constitute a THUMP domain. ATP contacts are provided by residues 185–186 (LI), Lys267, Gly289, and Gln298. A disulfide bond links Cys346 and Cys458. The region spanning 406–484 (IDTNEVVIDI…GYHNVKVYRP (79 aa)) is the Rhodanese domain. The Cysteine persulfide intermediate role is filled by Cys458.

It belongs to the ThiI family.

It is found in the cytoplasm. The catalysed reaction is [ThiI sulfur-carrier protein]-S-sulfanyl-L-cysteine + a uridine in tRNA + 2 reduced [2Fe-2S]-[ferredoxin] + ATP + H(+) = [ThiI sulfur-carrier protein]-L-cysteine + a 4-thiouridine in tRNA + 2 oxidized [2Fe-2S]-[ferredoxin] + AMP + diphosphate. It catalyses the reaction [ThiS sulfur-carrier protein]-C-terminal Gly-Gly-AMP + S-sulfanyl-L-cysteinyl-[cysteine desulfurase] + AH2 = [ThiS sulfur-carrier protein]-C-terminal-Gly-aminoethanethioate + L-cysteinyl-[cysteine desulfurase] + A + AMP + 2 H(+). The protein operates within cofactor biosynthesis; thiamine diphosphate biosynthesis. In terms of biological role, catalyzes the ATP-dependent transfer of a sulfur to tRNA to produce 4-thiouridine in position 8 of tRNAs, which functions as a near-UV photosensor. Also catalyzes the transfer of sulfur to the sulfur carrier protein ThiS, forming ThiS-thiocarboxylate. This is a step in the synthesis of thiazole, in the thiamine biosynthesis pathway. The sulfur is donated as persulfide by IscS. The protein is tRNA sulfurtransferase of Shewanella oneidensis (strain ATCC 700550 / JCM 31522 / CIP 106686 / LMG 19005 / NCIMB 14063 / MR-1).